The following is a 169-amino-acid chain: Peptide deformylase (169 aa).

Cys-91 and His-133 together coordinate Fe cation. Glu-134 is a catalytic residue. His-137 lines the Fe cation pocket.

Belongs to the polypeptide deformylase family. Fe(2+) is required as a cofactor.

It catalyses the reaction N-terminal N-formyl-L-methionyl-[peptide] + H2O = N-terminal L-methionyl-[peptide] + formate. Functionally, removes the formyl group from the N-terminal Met of newly synthesized proteins. Requires at least a dipeptide for an efficient rate of reaction. N-terminal L-methionine is a prerequisite for activity but the enzyme has broad specificity at other positions. This is Peptide deformylase from Haemophilus influenzae (strain 86-028NP).